A 416-amino-acid chain; its full sequence is Xyloglucan O-acetyltransferase 1 (416 aa).

Residues 1–14 (MGLNEQQNVPSQRK) lie on the Cytoplasmic side of the membrane. The chain crosses the membrane as a helical; Signal-anchor for type II membrane protein span at residues 15–35 (IIVFIVLAFIPIALFRLCFNN). Residues 36–416 (PFSSIKDTSL…MIEMLRRWKV (381 aa)) are Lumenal-facing. Disulfide bonds link Cys-79–Cys-129, Cys-100–Cys-165, Cys-109–Cys-395, and Cys-318–Cys-391. N-linked (GlcNAc...) asparagine glycosylation occurs at Asn-96. The GDS motif motif lies at 152–154 (GDS). Catalysis depends on Ser-154, which acts as the Nucleophile. Residues Asn-194, Asn-269, and Asn-319 are each glycosylated (N-linked (GlcNAc...) asparagine). The active-site Proton donor is the Asp-390. The short motif at 390-393 (DCLH) is the DXXH motif element. His-393 serves as the catalytic Proton acceptor.

This sequence belongs to the PC-esterase family. TBL subfamily.

The protein resides in the golgi apparatus membrane. Functionally, xyloglucan acetyltransferase that catalyzes the acetylation of fucosylated Gal residues on xyloglucan side chains. Predominantly catalyze 6-O-monoacetylation of Gal residues in the Fuc-Gal-Xyl trisaccharide side chains of xyloglucan oligomers. Involved in xyloglucan specific O-acetylation in roots and rosette leaves. The protein is Xyloglucan O-acetyltransferase 1 of Arabidopsis thaliana (Mouse-ear cress).